We begin with the raw amino-acid sequence, 814 residues long: Rho GTPase-activating protein 26 (814 aa).

The 256-residue stretch at glutamate 7–threonine 262 folds into the BAR domain. The region spanning proline 265–proline 369 is the PH domain. A Rho-GAP domain is found at alanine 383–phenylalanine 568. The segment covering leucine 624–serine 648 has biased composition (low complexity). The interval leucine 624 to serine 696 is disordered. Residues serine 662–proline 672 show a composition bias toward pro residues. Serine 668 is subject to Phosphoserine. Threonine 670 carries the post-translational modification Phosphothreonine. The residue at position 671 (serine 671) is a Phosphoserine. The span at leucine 673–serine 696 shows a compositional bias: low complexity. The 59-residue stretch at threonine 756–leucine 814 folds into the SH3 domain.

Interacts with NYAP1, NYAP2 and MYO16. Interacts with MICAL1 and WDR44. Binds to the C-terminus of PTK2/FAK1. In terms of assembly, (Microbial infection) Interacts with human parainfluenza virus type 2 proteins P and V. Phosphorylated in a PINK1-dependent fashion promoting retrograde mitochondrial trafficking and clustering.

The protein localises to the endosome membrane. It localises to the cytoplasm. The protein resides in the cell junction. Its subcellular location is the focal adhesion. It is found in the cytoskeleton. GTPase-activating protein for RHOA and CDC42. Facilitates mitochondrial quality control by promoting Parkin-mediated recruitment of autophagosomes to damaged mitochondria. Negatively regulates the growth of human parainfluenza virus type 2 by inhibiting hPIV-2-mediated RHOA activation via interaction with two of its viral proteins P and V. In terms of biological role, associates with MICAL1 on the endosomal membrane to promote Rab8-Rab10-dependent tubule extension. After dissociation of MICAL1, recruits WDR44 which connects the endoplasmic reticulum (ER) with the endosomal tubule, thereby participating in the export of a subset of neosynthesized proteins. This is Rho GTPase-activating protein 26 (ARHGAP26) from Homo sapiens (Human).